The chain runs to 184 residues: MATFQAHFFAAVMCVGVLGLSKLCGADSCEYPDCVFTGLPRSSGVERYILLLNIIEVPDDIQQQCDILIQRAHNCTSQRTGCSRRVEESYDRRFYDGAYVMYLLDLGVYVCGHLSQLLDLKNCFTPKLQESVQSCINAAYNIQCLLDQYDQKNNCPPNTDDYFHTLVNNWLANNPYLGTGADRD.

The first 26 residues, 1-26 (MATFQAHFFAAVMCVGVLGLSKLCGA), serve as a signal peptide directing secretion. Intrachain disulfides connect cysteine 29-cysteine 34, cysteine 65-cysteine 111, cysteine 75-cysteine 82, cysteine 123-cysteine 155, and cysteine 135-cysteine 144. N-linked (GlcNAc...) asparagine glycosylation is present at asparagine 74.

Post-translationally, N-glycosylated. As to expression, highly expressed in atrium. Moderately expressed in the pericardium, pulmonary vein, nephridium, arteria anterior, ovotestis and connective tissue. Low expression found in intestine, lung plexus, diaphragm, subesophageal ganglion, ventricle and digestive gland. Very low expression found in columellar retractor, pedal nerves and cerebral ganglion. Not expressed in hemocytes.

It is found in the secreted. The protein is Cysteine-rich atrial secretory protein of Achatina achatina (Giant Ghana snail).